A 375-amino-acid polypeptide reads, in one-letter code: N-acetylneuraminate epimerase (375 aa).

The N-terminal stretch at 1 to 22 (MKLTKTALCTALFATFTFSANA) is a signal peptide. Kelch repeat units follow at residues 43 to 87 (TVYV…AAVD), 89 to 140 (KLYV…ASHG), 142 to 176 (KVYI…EIAA), 177 to 222 (AYFD…TIQG), 225 to 273 (LVVV…LAGA), 295 to 344 (KQYK…SYNN), and 346 to 375 (VLLI…LTIE). Residue E231 is the Proton acceptor of the active site.

The protein belongs to the NanM family. Homodimer.

The protein resides in the periplasm. It catalyses the reaction N-acetyl-alpha-neuraminate = N-acetyl-beta-neuraminate. Its function is as follows. Converts alpha-N-acetylneuranimic acid (Neu5Ac) to the beta-anomer, accelerating the equilibrium between the alpha- and beta-anomers. Probably facilitates sialidase-negative bacteria to compete successfully for limited amounts of extracellular Neu5Ac, which is likely taken up in the beta-anomer. In addition, the rapid removal of sialic acid from solution might be advantageous to the bacterium to damp down host responses. The sequence is that of N-acetylneuraminate epimerase from Haemophilus influenzae (strain PittEE).